The following is a 267-amino-acid chain: Hydroxyethylthiazole kinase (267 aa).

M46 lines the substrate pocket. 2 residues coordinate ATP: R121 and T167. A194 provides a ligand contact to substrate.

This sequence belongs to the Thz kinase family. The cofactor is Mg(2+).

The enzyme catalyses 5-(2-hydroxyethyl)-4-methylthiazole + ATP = 4-methyl-5-(2-phosphooxyethyl)-thiazole + ADP + H(+). Its pathway is cofactor biosynthesis; thiamine diphosphate biosynthesis; 4-methyl-5-(2-phosphoethyl)-thiazole from 5-(2-hydroxyethyl)-4-methylthiazole: step 1/1. Functionally, catalyzes the phosphorylation of the hydroxyl group of 4-methyl-5-beta-hydroxyethylthiazole (THZ). The chain is Hydroxyethylthiazole kinase from Rhizobium johnstonii (strain DSM 114642 / LMG 32736 / 3841) (Rhizobium leguminosarum bv. viciae).